The following is a 464-amino-acid chain: tRNA modification GTPase MnmE (464 aa).

The (6S)-5-formyl-5,6,7,8-tetrahydrofolate site is built by R27, E89, and R128. In terms of domain architecture, TrmE-type G spans 225–384 (GLATAIIGHP…LEDRIAAMFF (160 aa)). K(+) is bound at residue N235. GTP is bound by residues 235-240 (NVGKSS), 254-260 (TDVAGTT), and 279-282 (DTAG). Mg(2+) is bound at residue S239. 3 residues coordinate K(+): T254, V256, and T259. T260 contacts Mg(2+). K464 contributes to the (6S)-5-formyl-5,6,7,8-tetrahydrofolate binding site.

Belongs to the TRAFAC class TrmE-Era-EngA-EngB-Septin-like GTPase superfamily. TrmE GTPase family. Homodimer. Heterotetramer of two MnmE and two MnmG subunits. K(+) is required as a cofactor.

It is found in the cytoplasm. Exhibits a very high intrinsic GTPase hydrolysis rate. Involved in the addition of a carboxymethylaminomethyl (cmnm) group at the wobble position (U34) of certain tRNAs, forming tRNA-cmnm(5)s(2)U34. This is tRNA modification GTPase MnmE from Pediococcus pentosaceus (strain ATCC 25745 / CCUG 21536 / LMG 10740 / 183-1w).